The primary structure comprises 578 residues: Proline--tRNA ligase (578 aa).

The protein belongs to the class-II aminoacyl-tRNA synthetase family. ProS type 1 subfamily. As to quaternary structure, homodimer.

It is found in the cytoplasm. The enzyme catalyses tRNA(Pro) + L-proline + ATP = L-prolyl-tRNA(Pro) + AMP + diphosphate. Its function is as follows. Catalyzes the attachment of proline to tRNA(Pro) in a two-step reaction: proline is first activated by ATP to form Pro-AMP and then transferred to the acceptor end of tRNA(Pro). As ProRS can inadvertently accommodate and process non-cognate amino acids such as alanine and cysteine, to avoid such errors it has two additional distinct editing activities against alanine. One activity is designated as 'pretransfer' editing and involves the tRNA(Pro)-independent hydrolysis of activated Ala-AMP. The other activity is designated 'posttransfer' editing and involves deacylation of mischarged Ala-tRNA(Pro). The misacylated Cys-tRNA(Pro) is not edited by ProRS. The polypeptide is Proline--tRNA ligase (Burkholderia multivorans (strain ATCC 17616 / 249)).